Consider the following 488-residue polypeptide: Receptor-like tyrosine-protein kinase kin-15 (488 aa).

Positions 1 to 26 (MCLKMRYERIKYILLFSLMHLVYSNS) are cleaved as a signal peptide. N-linked (GlcNAc...) asparagine glycosylation occurs at asparagine 25. Residues 27–50 (TFESFTENPHISSQISNVLYMDQM) lie on the Extracellular side of the membrane. Residues 51–70 (FIIYILICILLILISVIVYL) traverse the membrane as a helical segment. The Cytoplasmic portion of the chain corresponds to 71–488 (SKRYSQQMMQ…SKLEDWIRRD (418 aa)). A Protein kinase domain is found at 144–458 (EISEDKLGSG…VEFFEEHLSV (315 aa)). Residues 150–158 (LGSGFFGEV) and lysine 183 contribute to the ATP site. Aspartate 319 acts as the Proton acceptor in catalysis.

It belongs to the protein kinase superfamily. Tyr protein kinase family. Hypodermal cells.

Its subcellular location is the cell membrane. It catalyses the reaction L-tyrosyl-[protein] + ATP = O-phospho-L-tyrosyl-[protein] + ADP + H(+). May be specifically involved in cell-cell interactions regulating cell fusions that generate the hypodermis during postembryonic development. It has a role in the development of the HYP7 hypodermal syncytium. In Caenorhabditis elegans, this protein is Receptor-like tyrosine-protein kinase kin-15 (kin-15).